We begin with the raw amino-acid sequence, 331 residues long: MIIAIDGMGGDNAPEAVVKGCVEAIKGNSSIHIIITGPSDKISAELKKYTFNEESIEIVDAKDVITNNEHPVMAVRRKKESSLYKALNLVKEGKADAVISAGSTGALMAGATLMIGRIKGIDRVALSPIMPGKNSPFMVTDAGANVDCKPQYLVQFALMGKIYFESVLGVKKPTIGLVNIGAEEEKGNELTKSAYKLLKESGLNFVGNVEPRDASTGDVDILVCDGFVGNTLLKMYEGVALNLFKMLKSEITSSTRAKVGALMLKPVLKDFAKKFDYSEYGGSPFLGSKGIVIKAHGSSNSKAFKNAINQAVSCSENKIIDKISRQLEELN.

The protein belongs to the PlsX family. As to quaternary structure, homodimer. Probably interacts with PlsY.

Its subcellular location is the cytoplasm. The catalysed reaction is a fatty acyl-[ACP] + phosphate = an acyl phosphate + holo-[ACP]. The protein operates within lipid metabolism; phospholipid metabolism. Catalyzes the reversible formation of acyl-phosphate (acyl-PO(4)) from acyl-[acyl-carrier-protein] (acyl-ACP). This enzyme utilizes acyl-ACP as fatty acyl donor, but not acyl-CoA. The sequence is that of Phosphate acyltransferase from Clostridium acetobutylicum (strain ATCC 824 / DSM 792 / JCM 1419 / IAM 19013 / LMG 5710 / NBRC 13948 / NRRL B-527 / VKM B-1787 / 2291 / W).